A 573-amino-acid chain; its full sequence is Dihydroxy-acid dehydratase (573 aa).

Cysteine 62 lines the [2Fe-2S] cluster pocket. Residue aspartate 94 participates in Mg(2+) binding. [2Fe-2S] cluster is bound at residue cysteine 135. Mg(2+)-binding residues include aspartate 136 and lysine 137. Lysine 137 bears the N6-carboxylysine mark. A [2Fe-2S] cluster-binding site is contributed by cysteine 212. Glutamate 463 serves as a coordination point for Mg(2+). The active-site Proton acceptor is serine 489.

It belongs to the IlvD/Edd family. Homodimer. [2Fe-2S] cluster is required as a cofactor. Mg(2+) serves as cofactor.

The catalysed reaction is (2R)-2,3-dihydroxy-3-methylbutanoate = 3-methyl-2-oxobutanoate + H2O. The enzyme catalyses (2R,3R)-2,3-dihydroxy-3-methylpentanoate = (S)-3-methyl-2-oxopentanoate + H2O. It participates in amino-acid biosynthesis; L-isoleucine biosynthesis; L-isoleucine from 2-oxobutanoate: step 3/4. It functions in the pathway amino-acid biosynthesis; L-valine biosynthesis; L-valine from pyruvate: step 3/4. Its function is as follows. Functions in the biosynthesis of branched-chain amino acids. Catalyzes the dehydration of (2R,3R)-2,3-dihydroxy-3-methylpentanoate (2,3-dihydroxy-3-methylvalerate) into 2-oxo-3-methylpentanoate (2-oxo-3-methylvalerate) and of (2R)-2,3-dihydroxy-3-methylbutanoate (2,3-dihydroxyisovalerate) into 2-oxo-3-methylbutanoate (2-oxoisovalerate), the penultimate precursor to L-isoleucine and L-valine, respectively. This Renibacterium salmoninarum (strain ATCC 33209 / DSM 20767 / JCM 11484 / NBRC 15589 / NCIMB 2235) protein is Dihydroxy-acid dehydratase.